We begin with the raw amino-acid sequence, 144 residues long: MNKFIKKINFIKNFSSCENWEEKYLYIIELGNKLSPFPEKFRKNSNLIPGCQNDSWIYLIYENTKKIKFYGDSNSLIVKGLIAIIFILHEDLKLSEILTFDVKPYFNKLSLTNYLTPSRVQGLSSISKFIKKSARCLLIKEKIL.

Cys-51 serves as the catalytic Cysteine persulfide intermediate.

This sequence belongs to the SufE family. As to quaternary structure, homodimer. Interacts with SufS.

It localises to the cytoplasm. The protein operates within cofactor biosynthesis; iron-sulfur cluster biosynthesis. Functionally, participates in cysteine desulfuration mediated by SufS. Cysteine desulfuration mobilizes sulfur from L-cysteine to yield L-alanine and constitutes an essential step in sulfur metabolism for biosynthesis of a variety of sulfur-containing biomolecules. Functions as a sulfur acceptor for SufS, by mediating the direct transfer of the sulfur atom from the S-sulfanylcysteine of SufS, an intermediate product of cysteine desulfuration process. In Wigglesworthia glossinidia brevipalpis, this protein is Cysteine desulfuration protein SufE.